A 351-amino-acid polypeptide reads, in one-letter code: Inositol monophosphatase 3 (351 aa).

A helical membrane pass occupies residues 11–31 (LGIGVFCLLALGVLYHVYSGF). Mg(2+)-binding residues include glutamate 121, aspartate 162, leucine 164, aspartate 165, and aspartate 288. Residue glutamate 121 participates in substrate binding. Substrate contacts are provided by residues 164–167 (LDAT) and aspartate 288.

It belongs to the inositol monophosphatase superfamily. Mg(2+) serves as cofactor.

The protein resides in the membrane. The enzyme catalyses a myo-inositol phosphate + H2O = myo-inositol + phosphate. The protein operates within polyol metabolism; myo-inositol biosynthesis; myo-inositol from D-glucose 6-phosphate: step 2/2. In Xenopus laevis (African clawed frog), this protein is Inositol monophosphatase 3 (bpnt2).